The chain runs to 1693 residues: Non-structural polyprotein pORF1 (1693 aa).

The Alphavirus-like MT domain occupies 56-240; it reads VFRPEVFWNH…HDVSNLRSWI (185 aa). The segment at 60 to 240 is methyltransferase; that stretch reads EVFWNHPIQR…HDVSNLRSWI (181 aa). The interval 241–439 is Y-domain; it reads RTTKVTGDHP…FYAQCRRWLS (199 aa). The cysteines at positions 434 and 481 are disulfide-linked. The segment at 442 to 509 is putative protease; it reads FHLDPRVLVF…EAYEGSDVDP (68 aa). Positions 510-691 are zinc-binding; sequence AESAISDISG…FSPGHVWESA (182 aa). Positions 671, 673, and 686 each coordinate Zn(2+). The tract at residues 712-778 is hinge; that stretch reads SSPARPDLGF…AITHQTARHR (67 aa). Positions 732 to 768 are disordered; sequence ATPTLAAPLPPPAPDPSPPPSAPALAEPASGATAGAP. A compositionally biased stretch (pro residues) spans 739-753; sequence PLPPPAPDPSPPPSA. A compositionally biased stretch (low complexity) spans 754–768; sequence PALAEPASGATAGAP. The 147-residue stretch at 775–921 folds into the Macro domain; the sequence is ARHRRLLFTY…LYLPELAARW (147 aa). An X-domain region spans residues 785 to 942; that stretch reads PDGSKVFAGS…TITEDVARTA (158 aa). The 149-residue stretch at 934-1082 folds into the (+)RNA virus helicase ATP-binding domain; that stretch reads ITEDVARTAN…RPDLGPTSWW (149 aa). Residues 960–1204 form an NTPase/helicase region; sequence GCRVTPGVVQ…ISDAIVNNFF (245 aa). 975-982 contributes to the ATP binding site; it reads GVPGSGKS. The region spanning 1083 to 1216 is the (+)RNA virus helicase C-terminal domain; sequence HVTHRWPADV…GGEIGHQRPS (134 aa). Residues 1207–1693 form an RNA-directed RNA polymerase region; sequence GGEIGHQRPS…LTNSILCRVE (487 aa). A RdRp catalytic domain is found at 1454–1565; that stretch reads SMVFENDFSE…LCSEYRQSPG (112 aa).

It belongs to the hepevirus non-structural polyprotein family. As to quaternary structure, the protease domain interacts with host EIF2AK4 (via C-terminus); this interaction inhibits dimerization of EIF2AK4 and prevents EIF2AK4-mediated phosphorylation of host EIF2A. Mg(2+) serves as cofactor. Post-translationally, ORF1 polyprotein does not seem to be processed into distinct enzymatic domains by a viral protease belonging to ORF1, but could be processed by a host serine protease like thrombin.

It is found in the host cytoplasm. The protein localises to the host perinuclear region. It carries out the reaction RNA(n) + a ribonucleoside 5'-triphosphate = RNA(n+1) + diphosphate. The catalysed reaction is GTP + S-adenosyl-L-methionine = N(7)-methyl-GTP + S-adenosyl-L-homocysteine. Putative protease: Inhibited by chymostatin. In terms of biological role, methyltransferase: Displays a capping enzyme activity. This function is necessary since all viral RNAs are synthesized in the cytoplasm, and host capping enzymes are restricted to the nucleus. The enzymatic reaction involves a covalent link between 7-methyl-GMP and the methyltransferase, whereas eukaryotic capping enzymes form a covalent complex only with GMP. Methyltransferase catalyzes transfer of a methyl group from S-adenosylmethionine to GTP and GDP to yield m(7)GTP or m(7)GDP. GDP is a better substrate than GTP. This enzyme also displays guanylyltransferase activity to form a covalent complex, methyltransferase-m(7)GMP, from which 7-methyl-GMP is transferred to the mRNA to create the cap structure. Y-domain: Indispensable for virus replication. Its function is as follows. Putative protease: The putative protease domain although necessary for replication of the virus may not be a protease but rather a structural Zn(2+)-binding domain. Inhibits induction of IFN-beta by MDA5 and RIG-I pathways and down-regulates the expression of MDA5. Functionally, NTPase/helicase: Multi-functional protein that exhibits NTPase and RNA unwinding activities. Hydrolyzes all NTPs efficiently and unwinds RNA duplexes containing 5' overhangs. Possesses a sequence independent RNA-5'-triphosphatase (RTPase) activity suggestive of its role in forming viral cap structure. Also participates in viral genome replication, RNA translocation and genome packaging/unpackaging. In terms of biological role, RNA-directed RNA polymerase: Plays an essential role in the virus replication. Binds to the 3'-end of the genomic RNA to initiate viral replication. The polypeptide is Non-structural polyprotein pORF1 (Homo sapiens (Human)).